The chain runs to 70 residues: Large ribosomal subunit protein bL31 (70 aa).

Zn(2+) is bound by residues cysteine 16, cysteine 18, cysteine 37, and cysteine 40.

Belongs to the bacterial ribosomal protein bL31 family. Type A subfamily. In terms of assembly, part of the 50S ribosomal subunit. Zn(2+) serves as cofactor.

In terms of biological role, binds the 23S rRNA. The protein is Large ribosomal subunit protein bL31 of Haemophilus ducreyi (strain 35000HP / ATCC 700724).